The chain runs to 410 residues: MTRIAYLDCPTGISGDMCLGALLDGGVPLDYLQHHLQGLGIAEEFSLSWHKVEHQGQQASKAEVQLRAHGHHHHPPARHWPDIVALIQQAGLPLRAEAWSLAIFRELALAEAAVHGVAAEQVHFHEVGATDALVDIVGTCLGLDWLGIEELYCSALPTGGGTVKAAHGRLPVPVPAVLQLWQKFHVPVYSNGIERELVTPTGAAIAVTLASQFGPPPPLQLEKIGLGAGTQELPLANILRLWIGQKATQAAVPQGQDGSDRVEEIILLETQIDDLNPQAIGYTMEALFAAGAVDVFTQAIGMKKSRPGVLLSVVCTAETVESCETVLFRETTTLGIRRSQQQRRILARQIQTLDTRYGPIRLKIAYQQGKIVNVQPEFEDCAQVAKQQDLPWQQIHQLALSTWYQHQPSP.

Belongs to the LarC family.

This Cyanothece sp. (strain PCC 7425 / ATCC 29141) protein is Putative nickel insertion protein.